We begin with the raw amino-acid sequence, 130 residues long: Small ribosomal subunit protein uS9 (130 aa).

Belongs to the universal ribosomal protein uS9 family.

The protein is Small ribosomal subunit protein uS9 of Enterococcus faecalis (strain ATCC 700802 / V583).